The primary structure comprises 487 residues: Lysophospholipid acyltransferase 5 (487 aa).

Alanine 2 carries the post-translational modification N-acetylalanine. 4 consecutive transmembrane segments (helical) span residues 44–64 (LIFSIFLGYPLALFYRHYLFY), 84–104 (FNFGHQFYHSLLCVVLQFLIL), 111–131 (VTAVITTLCFQMAYLLAGYYY), and 180–200 (GVPSLLEVAGFSYFYGAFLVG). Residue asparagine 225 is glycosylated (N-linked (GlcNAc...) asparagine). A run of 2 helical transmembrane segments spans residues 236-256 (LGLVYLVGYTLLSPHITDDYL) and 285-305 (VTCWLVTEGVCILSGLGFNGF). N-linked (GlcNAc...) asparagine glycans are attached at residues asparagine 308 and asparagine 331. Active-site residues include asparagine 338 and histidine 374. 3 helical membrane passes run 364–384 (GLSLLFLALWHGLHSGYLICF), 422–442 (LVQQTIHWLFMGYSMTAFCLF), and 453–473 (SIYFLGHVFFLSLLFILPYIH). The short motif at 484–487 (KKRE) is the Di-lysine motif element.

The protein belongs to the membrane-bound acyltransferase family. In terms of tissue distribution, detected ubiquitously, with high expression levels in small intestine, brown adipose tissue, liver, kidney and testis. Expressed in liver and both proximal and distal small intestine (at protein level). Expressed in peritoneal macrophages.

The protein localises to the endoplasmic reticulum membrane. The catalysed reaction is a 1-acyl-sn-glycero-3-phosphocholine + an acyl-CoA = a 1,2-diacyl-sn-glycero-3-phosphocholine + CoA. It catalyses the reaction a 1-acyl-sn-glycero-3-phosphoethanolamine + an acyl-CoA = a 1,2-diacyl-sn-glycero-3-phosphoethanolamine + CoA. The enzyme catalyses a 1-acyl-sn-glycero-3-phospho-L-serine + an acyl-CoA = a 1,2-diacyl-sn-glycero-3-phospho-L-serine + CoA. It carries out the reaction (9Z,12Z)-octadecadienoyl-CoA + a 1-acyl-sn-glycero-3-phosphocholine = 1-acyl-2-(9Z,12Z)-octadecadienoyl-sn-glycero-3-phosphocholine + CoA. The catalysed reaction is (5Z,8Z,11Z,14Z)-eicosatetraenoyl-CoA + a 1-acyl-sn-glycero-3-phosphocholine = 1-acyl-2-(5Z,8Z,11Z,14Z-eicosatetraenoyl)-sn-glycero-3-phosphocholine + CoA. It catalyses the reaction dodecanoyl-CoA + 1-hexadecanoyl-sn-glycero-3-phosphocholine = 1-hexadecanoyl-2-dodecanoyl-sn-glycero-3-phosphocholine + CoA. The enzyme catalyses octadecanoyl-CoA + 1-hexadecanoyl-sn-glycero-3-phosphocholine = 1-hexadecanoyl-2-octadecanoyl-sn-glycero-3-phosphocholine + CoA. It carries out the reaction 1-dodecanoyl-sn-glycero-3-phosphocholine + hexadecanoyl-CoA = 1-dodecanoyl-2-hexadecanoyl-sn-glycero-3-phosphocholine + CoA. The catalysed reaction is 1-tetradecanoyl-sn-glycero-3-phosphocholine + hexadecanoyl-CoA = 1-tetradecanoyl-2-hexadecanoyl-sn-glycero-3-phosphocholine + CoA. It catalyses the reaction 1-hexadecanoyl-sn-glycero-3-phosphocholine + hexadecanoyl-CoA = 1,2-dihexadecanoyl-sn-glycero-3-phosphocholine + CoA. The enzyme catalyses 1-octadecanoyl-sn-glycero-3-phosphocholine + hexadecanoyl-CoA = 1-octadecanoyl-2-hexadecanoyl-sn-glycero-3-phosphocholine + CoA. It carries out the reaction 1-(9Z-octadecenoyl)-sn-glycero-3-phosphocholine + hexadecanoyl-CoA = 1-(9Z-octadecenoyl)-2-hexadecanoyl-sn-glycero-3-phosphocholine + CoA. The catalysed reaction is (9Z)-hexadecenoyl-CoA + 1-hexadecanoyl-sn-glycero-3-phosphocholine = 1-hexadecanoyl-2-(9Z-hexadecenoyl)-sn-glycero-3-phosphocholine + CoA. It catalyses the reaction 1-hexadecanoyl-sn-glycero-3-phosphocholine + (9Z)-octadecenoyl-CoA = 1-hexadecanoyl-2-(9Z-octadecenoyl)-sn-glycero-3-phosphocholine + CoA. The enzyme catalyses (9Z,12Z)-octadecadienoyl-CoA + 1-hexadecanoyl-sn-glycero-3-phosphocholine = 1-hexadecanoyl-2-(9Z,12Z-octadecadienoyl)-sn-glycero-3-phosphocholine + CoA. It carries out the reaction 1-dodecanoyl-sn-glycero-3-phosphocholine + (5Z,8Z,11Z,14Z)-eicosatetraenoyl-CoA = 1-dodecanoyl-2-(5Z,8Z,11Z,14Z)-eicosatetraenoyl-sn-glycero-3-phosphocholine + CoA. The catalysed reaction is (5Z,8Z,11Z,14Z)-eicosatetraenoyl-CoA + 1-hexadecanoyl-sn-glycero-3-phosphocholine = 1-hexadecanoyl-2-(5Z,8Z,11Z,14Z-eicosatetraenoyl)-sn-glycero-3-phosphocholine + CoA. It catalyses the reaction 1-octadecanoyl-sn-glycero-3-phosphocholine + (5Z,8Z,11Z,14Z)-eicosatetraenoyl-CoA = 1-octadecanoyl-2-(5Z,8Z,11Z,14Z-eicosatetraenoyl)-sn-glycero-3-phosphocholine + CoA. The enzyme catalyses 1-eicosanoyl-sn-glycero-3-phosphocholine + (5Z,8Z,11Z,14Z)-eicosatetraenoyl-CoA = 1-eicosanoyl-2-(5Z,8Z,11Z,14Z)-eicosatetraenoyl-sn-glycero-3-phosphocholine + CoA. It carries out the reaction 1-(9Z-octadecenoyl)-sn-glycero-3-phosphocholine + (9Z)-octadecenoyl-CoA = 1,2-di-(9Z-octadecenoyl)-sn-glycero-3-phosphocholine + CoA. The catalysed reaction is 1-(9Z-octadecenoyl)-sn-glycero-3-phosphocholine + (9Z,12Z)-octadecadienoyl-CoA = 1-(9Z)-octadecenoyl-2-(9Z,12Z)-octadecadienoyl-sn-glycero-3-phosphocholine + CoA. It catalyses the reaction 1-(9Z-octadecenoyl)-sn-glycero-3-phosphocholine + (5Z,8Z,11Z,14Z)-eicosatetraenoyl-CoA = 1-(9Z)-octadecenoyl-2-(5Z,8Z,11Z,14Z)-icosatetraenoyl-sn-glycero-3-phosphocholine + CoA. The enzyme catalyses a 1-acyl-sn-glycero-3-phosphoethanolamine + (9Z,12Z)-octadecadienoyl-CoA = 1-acyl-2-(9Z,12Z)-octadecadienoyl-sn-glycero-3-phosphoethanolamine + CoA. It carries out the reaction 1-(9Z-octadecenoyl)-sn-glycero-3-phosphoethanolamine + (9Z,12Z)-octadecadienoyl-CoA = 1-(9Z)-octadecenoyl-2-(9Z,12Z)-octadecadienoyl-sn-glycero-3-phosphoethanolamine + CoA. The catalysed reaction is 1-(10Z-heptadecenoyl)-sn-glycero-3-phosphoethanolamine + (9Z,12Z)-octadecadienoyl-CoA = 1-(10Z-heptadecenoyl)-2-(9Z,12Z-octadecadienoyl)-sn-glycero-3-phosphoethanolamine + CoA. It catalyses the reaction a 1-acyl-sn-glycero-3-phosphoethanolamine + (5Z,8Z,11Z,14Z)-eicosatetraenoyl-CoA = 1-acyl-2-(5Z,8Z,11Z,14Z)-eicosatetraenoyl-sn-glycero-3-phosphoethanolamine + CoA. The enzyme catalyses 1-hexadecanoyl-sn-glycero-3-phosphoethanolamine + (5Z,8Z,11Z,14Z)-eicosatetraenoyl-CoA = 1-hexadecanoyl-2-(5Z,8Z,11Z,14Z-eicosatetraenoyl)-sn-glycero-3-phosphoethanolamine + CoA. It carries out the reaction 1-(9Z-octadecenoyl)-sn-glycero-3-phosphoethanolamine + (5Z,8Z,11Z,14Z)-eicosatetraenoyl-CoA = 1-(9Z)-octadecenoyl-2-(5Z,8Z,11Z,14Z)-eicosatetraenoyl-sn-glycero-3-phosphoethanolamine + CoA. The catalysed reaction is 1-(10Z-heptadecenoyl)-sn-glycero-3-phosphoethanolamine + (5Z,8Z,11Z,14Z)-eicosatetraenoyl-CoA = 1-(10Z-heptadecenoyl)-2-(5Z,8Z,11Z,14Z-eicosatetraenoyl)-sn-glycero-3-phosphoethanolamine + CoA. It catalyses the reaction a 1-O-(1Z-alkenyl)-sn-glycero-3-phosphoethanolamine + (5Z,8Z,11Z,14Z)-eicosatetraenoyl-CoA = 1-O-(1Z)-alkenyl-2-(5Z,8Z,11Z,14Z)-eicosatetraenoyl-sn-glycero-3-phosphoethanolamine + CoA. The enzyme catalyses a 1-acyl-sn-glycero-3-phospho-L-serine + (9Z,12Z)-octadecadienoyl-CoA = 1-acyl-2-(9Z,12Z-octadecadienoyl)-sn-glycero-3-phospho-L-serine + CoA. It carries out the reaction a 1-acyl-sn-glycero-3-phospho-L-serine + (5Z,8Z,11Z,14Z)-eicosatetraenoyl-CoA = 1-acyl-2-(5Z,8Z,11Z,14Z-eicosatetraenoyl)-sn-glycero-3-phospho-L-serine + CoA. The catalysed reaction is 1-hexadecanoyl-sn-glycero-3-phospho-L-serine + (9Z)-octadecenoyl-CoA = 1-hexadecanoyl-2-(9Z-octadecenoyl)-sn-glycero-3-phospho-L-serine + CoA. It catalyses the reaction 1-(9Z-octadecenoyl)-sn-glycero-3-phospho-L-serine + (9Z)-octadecenoyl-CoA = 1,2-di-(9Z)-octadecenoyl-sn-glycero-3-phospho-L-serine + CoA. The enzyme catalyses 1-hexadecanoyl-sn-glycero-3-phospho-L-serine + (9Z,12Z)-octadecadienoyl-CoA = 1-hexadecanoyl-2-(9Z,12Z-octadecadienoyl)-sn-glycero-3-phospho-L-serine + CoA. It carries out the reaction 1-(9Z-octadecenoyl)-sn-glycero-3-phospho-L-serine + (9Z,12Z)-octadecadienoyl-CoA = 1-(9Z-octadecenoyl)-2-(9Z,12Z-octadienoyl)-sn-glycero-3-phospho-L-serine + CoA. The catalysed reaction is 1-hexadecanoyl-sn-glycero-3-phospho-L-serine + (5Z,8Z,11Z,14Z)-eicosatetraenoyl-CoA = 1-hexadecanoyl-2-(5Z,8Z,11Z,14Z-eicosatetraenoyl)-sn-glycero-3-phospho-L-serine + CoA. It catalyses the reaction 1-(9Z-octadecenoyl)-sn-glycero-3-phospho-L-serine + (5Z,8Z,11Z,14Z)-eicosatetraenoyl-CoA = 1-(9Z-octadecenoyl)-2-(5Z,8Z,11Z,14Z-eicosatetraenoyl)-sn-glycero-3-phospho-L-serine + CoA. Its pathway is lipid metabolism; phospholipid metabolism. Lysophospholipid O-acyltransferase (LPLAT) that catalyzes the reacylation step of the phospholipid remodeling process also known as the Lands cycle. Catalyzes transfer of the fatty acyl chain from fatty acyl-CoA to 1-acyl lysophospholipid to form various classes of phospholipids. Converts 1-acyl lysophosphatidylcholine (LPC) into phosphatidylcholine (PC) (LPCAT activity), 1-acyl lysophosphatidylserine (LPS) into phosphatidylserine (PS) (LPSAT activity) and 1-acyl lysophosphatidylethanolamine (LPE) into phosphatidylethanolamine (PE) (LPEAT activity). Favors polyunsaturated fatty acyl-CoAs as acyl donors compared to saturated fatty acyl-CoAs. Has higher activity for LPC acyl acceptors compared to LPEs and LPSs. Can also transfer the fatty acyl chain from fatty acyl-CoA to 1-O-alkyl lysophospholipid or 1-O-alkenyl lysophospholipid with lower efficiency. Acts as a major LPC O-acyltransferase in liver and intestine. As a component of the liver X receptor/NR1H3 or NR1H2 signaling pathway, mainly catalyzes the incorporation of arachidonate into PCs of endoplasmic reticulum (ER) membranes, increasing membrane dynamics and enabling triacylglycerols transfer to nascent very low-density lipoprotein (VLDL) particles. Promotes processing of sterol regulatory protein SREBF1 in hepatocytes, likely by facilitating the translocation of SREBF1-SCAP complex from ER to the Golgi apparatus. Participates in mechanisms by which the liver X receptor/NR1H3 or NR1H2 signaling pathway counteracts lipid-induced ER stress response and inflammation. Down-regulates hepatic inflammation by limiting arachidonic acid availability for synthesis of inflammatory eicosanoids, such as prostaglandins. In enterocytes, acts as a component of a gut-brain feedback loop that coordinates dietary lipid absorption and food intake. Regulates the abundance of PCs containing linoleate and arachidonate in enterocyte membranes, enabling passive diffusion of fatty acids and cholesterol across the membrane for efficient chylomicron assembly. In the intestinal crypt, acts as a component of dietary-responsive phospholipid-cholesterol axis, regulating the biosynthesis of cholesterol and its mitogenic effects on intestinal stem cells. This Mus musculus (Mouse) protein is Lysophospholipid acyltransferase 5 (Lpcat3).